Here is a 173-residue protein sequence, read N- to C-terminus: Alpha-crystallin A chain (173 aa).

M1 is subject to N-acetylmethionine. A required for complex formation with BFSP1 and BFSP2 region spans residues 1-63 (MDVTIQHPWF…RTVLDSGVSE (63 aa)). At Q6 the chain carries Deamidated glutamine; partial. S45 carries the phosphoserine modification. A Deamidated glutamine; partial modification is found at Q50. In terms of domain architecture, sHSP spans 52–162 (LFRTVLDSGV…GHSERAIPVS (111 aa)). Residue K70 is modified to N6-acetyllysine. Deamidated glutamine; partial is present on Q90. K99 carries the post-translational modification N6-acetyllysine. H100 contacts Zn(2+). Deamidated asparagine; partial is present on N101. Positions 102 and 107 each coordinate Zn(2+). S122 carries the post-translational modification Phosphoserine. Position 123 is a deamidated asparagine; partial (N123). The tract at residues 145–173 (KVQSGLDAGHSERAIPVSREEKPSSAPSS) is disordered. A Deamidated glutamine; partial modification is found at Q147. Positions 153–167 (GHSERAIPVSREEKP) are enriched in basic and acidic residues. Position 154 (H154) interacts with Zn(2+). An O-linked (GlcNAc) serine glycan is attached at S162.

This sequence belongs to the small heat shock protein (HSP20) family. Heteromer composed of three CRYAA and one CRYAB subunits. Inter-subunit bridging via zinc ions enhances stability, which is crucial as there is no protein turn over in the lens. Can also form homodimers and homotetramers (dimers of dimers) which serve as the building blocks of homooligomers. Within homooligomers, the zinc-binding motif is created from residues of 3 different molecules. His-100 and Glu-102 from one molecule are ligands of the zinc ion, and His-107 and His-154 residues from additional molecules complete the site with tetrahedral coordination geometry. Part of a complex required for lens intermediate filament formation composed of BFSP1, BFSP2 and CRYAA. In terms of processing, acetylation at Lys-70 may increase chaperone activity. Post-translationally, undergoes age-dependent proteolytical cleavage at the C-terminus.

The protein localises to the cytoplasm. Its subcellular location is the nucleus. Contributes to the transparency and refractive index of the lens. Acts as a chaperone, preventing aggregation of various proteins under a wide range of stress conditions. Required for the correct formation of lens intermediate filaments as part of a complex composed of BFSP1, BFSP2 and CRYAA. This is Alpha-crystallin A chain (CRYAA) from Eulemur fulvus fulvus (Brown lemur).